Reading from the N-terminus, the 469-residue chain is MNPNQKIMTIGSVSLIIAAVCFLMQIAILVTTVTLHFKQCECDSPSNNQVKPCEPIIIERNITEIVYLNNTTIEKETCPKLVEYRNWSKPQCKITGFAPFSKDNSIRLSAGGDIWVTREPYVSCDPGKCYQFALGQGTTLDNKHSNDTIHDRIPHRTLLMNELGVPFHLGTRQVCIAWSSSSCHDGKAWLHVCVTGDDKNATASFIYDGRLVDSIGSWSQNILRTQESECVCINGTCTVVMTDGSASGRADTRILFIEEGKIVHISPLSGSAQHVEECSCYPRYPNVRCICRDNWKGSNRPIVDINMKDYSIDSSYVCSGLVGDTPRNDDRSSKSNCRNPNNEKGNHGVKGWAFDNGDDVWMGRTISKDLRSGYETFKVIGGWFTPNSKSQVNRQVIVDSDNRSGYSGIFSVEGKSCINRCFYVELIRGRGQETRVWWTSNSIVVFCGTSGTYGKGSWPDGANINFMPI.

The Intravirion portion of the chain corresponds to 1–9 (MNPNQKIMT). The helical transmembrane segment at 10–30 (IGSVSLIIAAVCFLMQIAILV) threads the bilayer. The involved in apical transport and lipid raft association stretch occupies residues 11–33 (GSVSLIIAAVCFLMQIAILVTTV). The Virion surface segment spans residues 31-469 (TTVTLHFKQC…DGANINFMPI (439 aa)). Positions 36 to 88 (HFKQCECDSPSNNQVKPCEPIIIERNITEIVYLNNTTIEKETCPKLVEYRNWS) are hypervariable stalk region. Asn61, Asn69, Asn70, and Asn86 each carry an N-linked (GlcNAc...) asparagine; by host glycan. A head of neuraminidase region spans residues 91–469 (QCKITGFAPF…DGANINFMPI (379 aa)). 8 cysteine pairs are disulfide-bonded: Cys92/Cys417, Cys124/Cys129, Cys183/Cys230, Cys232/Cys237, Cys278/Cys291, Cys280/Cys289, Cys318/Cys337, and Cys421/Cys447. Arg118 lines the substrate pocket. A glycan (N-linked (GlcNAc...) asparagine; by host) is linked at Asn146. Residue Asp151 is the Proton donor/acceptor of the active site. Residue Arg152 participates in substrate binding. Residues Asn200 and Asn234 are each glycosylated (N-linked (GlcNAc...) asparagine; by host). 276 to 277 (EE) serves as a coordination point for substrate. Arg292 provides a ligand contact to substrate. Residues Asp293, Gly297, and Asp324 each contribute to the Ca(2+) site. A disordered region spans residues 323 to 344 (GDTPRNDDRSSKSNCRNPNNEK). Residues 334 to 343 (KSNCRNPNNE) are compositionally biased toward polar residues. A substrate-binding site is contributed by Arg371. Asn402 is a glycosylation site (N-linked (GlcNAc...) asparagine; by host). Tyr406 serves as the catalytic Nucleophile.

It belongs to the glycosyl hydrolase 34 family. Homotetramer. It depends on Ca(2+) as a cofactor. N-glycosylated.

The protein resides in the virion membrane. The protein localises to the host apical cell membrane. The enzyme catalyses Hydrolysis of alpha-(2-&gt;3)-, alpha-(2-&gt;6)-, alpha-(2-&gt;8)- glycosidic linkages of terminal sialic acid residues in oligosaccharides, glycoproteins, glycolipids, colominic acid and synthetic substrates.. With respect to regulation, inhibited by the neuraminidase inhibitors zanamivir (Relenza) and oseltamivir (Tamiflu). These drugs interfere with the release of progeny virus from infected cells and are effective against all influenza strains. Resistance to neuraminidase inhibitors is quite rare. In terms of biological role, catalyzes the removal of terminal sialic acid residues from viral and cellular glycoconjugates. Cleaves off the terminal sialic acids on the glycosylated HA during virus budding to facilitate virus release. Additionally helps virus spread through the circulation by further removing sialic acids from the cell surface. These cleavages prevent self-aggregation and ensure the efficient spread of the progeny virus from cell to cell. Otherwise, infection would be limited to one round of replication. Described as a receptor-destroying enzyme because it cleaves a terminal sialic acid from the cellular receptors. May facilitate viral invasion of the upper airways by cleaving the sialic acid moieties on the mucin of the airway epithelial cells. Likely to plays a role in the budding process through its association with lipid rafts during intracellular transport. May additionally display a raft-association independent effect on budding. Plays a role in the determination of host range restriction on replication and virulence. Sialidase activity in late endosome/lysosome traffic seems to enhance virus replication. The sequence is that of Neuraminidase from Influenza A virus (strain A/Swine/Hong Kong/3/1976 H3N2).